The chain runs to 609 residues: Indole-3-acetic acid-amido synthetase GH3.17 (609 aa).

The protein belongs to the IAA-amido conjugating enzyme family.

Functionally, catalyzes the synthesis of indole-3-acetic acid (IAA)-amino acid conjugates, providing a mechanism for the plant to cope with the presence of excess auxin. Strongly reactive with Glu, Gln, Trp, Asp, Ala, Leu, Phe, Gly, Tyr, Met, Ile and Val. Appears to favor Glu over Asp while the other GH3 favor Asp over Glu. Little or no product formation with His, Ser, Thr, Arg, Lys, or Cys. Also active on pyruvic and butyric acid analogs of IAA, PAA and the synthetic auxin naphthaleneacetic acid (NAA). The two chlorinated synthetic auxin herbicides 2,4-D and 3,6-dichloro-o-anisic acid (dicamba) cannot be used as substrates. In Arabidopsis thaliana (Mouse-ear cress), this protein is Indole-3-acetic acid-amido synthetase GH3.17 (GH3.17).